Consider the following 795-residue polypeptide: Phenylalanine--tRNA ligase beta subunit (795 aa).

Residues Ala-39 to Arg-148 form the tRNA-binding domain. The 76-residue stretch at Pro-401–Asn-476 folds into the B5 domain. 4 residues coordinate Mg(2+): Asp-454, Asp-460, Glu-463, and Glu-464. Residues Ser-701–Arg-794 form the FDX-ACB domain.

This sequence belongs to the phenylalanyl-tRNA synthetase beta subunit family. Type 1 subfamily. In terms of assembly, tetramer of two alpha and two beta subunits. Requires Mg(2+) as cofactor.

It localises to the cytoplasm. It catalyses the reaction tRNA(Phe) + L-phenylalanine + ATP = L-phenylalanyl-tRNA(Phe) + AMP + diphosphate + H(+). The protein is Phenylalanine--tRNA ligase beta subunit of Pectobacterium atrosepticum (strain SCRI 1043 / ATCC BAA-672) (Erwinia carotovora subsp. atroseptica).